We begin with the raw amino-acid sequence, 55 residues long: Ferredoxin (55 aa).

4Fe-4S ferredoxin-type domains lie at 2-27 (YFITDACISCGACESECPVSPISPGD) and 28-55 (SVYVIDADACIECGACANVCPVDAPQQK). [4Fe-4S] cluster-binding residues include cysteine 8, cysteine 11, cysteine 14, cysteine 18, cysteine 37, cysteine 40, cysteine 43, and cysteine 47.

[4Fe-4S] cluster is required as a cofactor.

In terms of biological role, ferredoxins are iron-sulfur proteins that transfer electrons in a wide variety of metabolic reactions. The polypeptide is Ferredoxin (Acetivibrio thermocellus (Hungateiclostridium thermocellum)).